We begin with the raw amino-acid sequence, 187 residues long: Peptide deformylase 2 (187 aa).

Fe cation contacts are provided by Cys-107 and His-149. Glu-150 is a catalytic residue. Residue His-153 participates in Fe cation binding.

The protein belongs to the polypeptide deformylase family. Requires Fe(2+) as cofactor.

It catalyses the reaction N-terminal N-formyl-L-methionyl-[peptide] + H2O = N-terminal L-methionyl-[peptide] + formate. In terms of biological role, removes the formyl group from the N-terminal Met of newly synthesized proteins. Requires at least a dipeptide for an efficient rate of reaction. N-terminal L-methionine is a prerequisite for activity but the enzyme has broad specificity at other positions. This Gloeobacter violaceus (strain ATCC 29082 / PCC 7421) protein is Peptide deformylase 2.